Reading from the N-terminus, the 862-residue chain is MEKNVTPMMRQYLDIKKKYKDAIIFFRVGNFYEMFFDDAIEASKLLNLTLTKRENVPMCGVPYHTSKEYIRKLILFDKKVAICEQAANSTSVGPLEREVVEVITPGVIVDEDFLNDDVNNYLVAISDYKNYYSFSYIDLSTSSLGIMFYENSFFEKLKRDLEKYSPKEIIVSENFYYEYSEKLNLNRFLINRVPAWHLDKDVAIKTIKEHFNILGLSSLGFDEEKPYYISIFLIINHIKNNLKNLLSNIDKIDINNDSLYMFLDDVTQVNLELVKNNNDFSSQYSLYSVLNDCKTAMGKRLLREFILNPILNIPEINTRLDHVEFFCKNISLTMTLREAFVNIWDVERIISRIQMKRYIKKDFLFIEKSLSVFFLVKKLFDKHNFDYWNFDKFEEDSISKVYFLINSAISSSSDELIKRGYDLKLDSLKDLKINANKYIDEYLESERLLSKINNLKIRKTNNRGLFFEVTKSNYAQVPPHFMESQTLNSSKRYKTEKLISLEANINNAEDSVVAFEQEIFDEIASNVVKHNKVLKKVAEFFAYIDLVVNFGYLAKKNEYKRPILTCSKEIFLEKSRHPVVEHYVKNTEIFTENFVKINKEKYFCLITGPNMAGKSTYLRQVALITLMAHIGSFVPASRAVIGITDKIFCRIGASDNLAKGESTFLVEMNETANILRNATEKSLIIMDEVGRGTSTNDGLAIAYSIIEYILEYIKARSLFATHFHELSAINHKAFINLSMKIEKQGNELVFLREVEEKPSLNSYGIYVARIAGLPLRVVDRANVILKSLGSRKDSSCLEFLPCISSDTCDREVLKNDTDVHVKLNEYLELKKFISNIDINNITPFQSIELLNQLVLKVISQSS.

Residue 608–615 (GPNMAGKS) participates in ATP binding.

The protein belongs to the DNA mismatch repair MutS family.

Functionally, this protein is involved in the repair of mismatches in DNA. It is possible that it carries out the mismatch recognition step. This protein has a weak ATPase activity. This chain is DNA mismatch repair protein MutS, found in Borreliella afzelii (strain PKo) (Borrelia afzelii).